We begin with the raw amino-acid sequence, 374 residues long: Probable plastid-lipid-associated protein 3, chloroplastic (374 aa).

The transit peptide at 1-46 directs the protein to the chloroplast; it reads MAMPPPLFAAASHASLLLPSPTIHSSTGSRRPFRLPLRSSRRPPVA. The interval 19 to 148 is disordered; the sequence is PSPTIHSSTG…EDNEEERREE (130 aa). Low complexity predominate over residues 28-54; it reads GSRRPFRLPLRSSRRPPVAAAAASGVP. Composition is skewed to pro residues over residues 64-73 and 127-136; these read APEPPSQPDP and PAPPPPPPPV.

This sequence belongs to the PAP/fibrillin family.

Its subcellular location is the plastid. The protein resides in the chloroplast. The sequence is that of Probable plastid-lipid-associated protein 3, chloroplastic (PAP3) from Oryza sativa subsp. japonica (Rice).